Here is a 101-residue protein sequence, read N- to C-terminus: Small ribosomal subunit protein uS14 (101 aa).

Belongs to the universal ribosomal protein uS14 family. As to quaternary structure, part of the 30S ribosomal subunit. Contacts proteins S3 and S10.

Its function is as follows. Binds 16S rRNA, required for the assembly of 30S particles and may also be responsible for determining the conformation of the 16S rRNA at the A site. In Cronobacter sakazakii (strain ATCC BAA-894) (Enterobacter sakazakii), this protein is Small ribosomal subunit protein uS14.